Consider the following 375-residue polypeptide: Queuine tRNA-ribosyltransferase (375 aa).

D90 (proton acceptor) is an active-site residue. Residues 90 to 94 (DSGGF), D144, Q190, and G217 contribute to the substrate site. The RNA binding stretch occupies residues 248 to 254 (GIGTPHY). The active-site Nucleophile is D267. The RNA binding; important for wobble base 34 recognition stretch occupies residues 272–276 (ARITR). Zn(2+) contacts are provided by C305, C307, C310, and H336.

Belongs to the queuine tRNA-ribosyltransferase family. As to quaternary structure, homodimer. Within each dimer, one monomer is responsible for RNA recognition and catalysis, while the other monomer binds to the replacement base PreQ1. The cofactor is Zn(2+).

It catalyses the reaction 7-aminomethyl-7-carbaguanine + guanosine(34) in tRNA = 7-aminomethyl-7-carbaguanosine(34) in tRNA + guanine. The protein operates within tRNA modification; tRNA-queuosine biosynthesis. In terms of biological role, catalyzes the base-exchange of a guanine (G) residue with the queuine precursor 7-aminomethyl-7-deazaguanine (PreQ1) at position 34 (anticodon wobble position) in tRNAs with GU(N) anticodons (tRNA-Asp, -Asn, -His and -Tyr). Catalysis occurs through a double-displacement mechanism. The nucleophile active site attacks the C1' of nucleotide 34 to detach the guanine base from the RNA, forming a covalent enzyme-RNA intermediate. The proton acceptor active site deprotonates the incoming PreQ1, allowing a nucleophilic attack on the C1' of the ribose to form the product. After dissociation, two additional enzymatic reactions on the tRNA convert PreQ1 to queuine (Q), resulting in the hypermodified nucleoside queuosine (7-(((4,5-cis-dihydroxy-2-cyclopenten-1-yl)amino)methyl)-7-deazaguanosine). This is Queuine tRNA-ribosyltransferase from Borreliella burgdorferi (strain ZS7) (Borrelia burgdorferi).